Consider the following 474-residue polypeptide: MKLFNTLTRQKEEFKPLVPGQVSMYVCGPTVYNYIHIGNARSAIAFDTIRRYFEYKGYKVNYVSNFTDVDDKMINEAGAEGTTVPELAERYIQAFLEDTRALNIEEATLHPRATHEIPAIIDFIQTLIDKGYAYEADGDVYYRTKKFADYGHLSDQNIDQLEEGASQHVNDEEQGRKEDPIDFALWKGQKAADEIAWDSPWGKGRPGWHIECSVMSTKYLGDTLDIHGGGQDLEFPHHENEIAQSEAKTGKKFVNYWLHNGFVTVGKDEEKMSKSLHNCVTVHDILKNVDPQVLRFFMASVQYRSQINYSEENLEQAANILGRFKNTLEGINYRLADATEGLPDPDLAKLVTETTAKFEAAMDDDFNVQNALTAIYEALPAVNSNANAEKADKESLRLFAKKLAAWLSVFGLDVDKLLAKEAGDDDAVIEELVAQRTEARKNKDWAKSDELRDQLKEMGVVLKDTPQGTRWSRE.

Residue Cys-27 coordinates Zn(2+). The 'HIGH' region signature appears at 29-39 (PTVYNYIHIGN). Zn(2+) contacts are provided by Cys-212, His-237, and Glu-241. Residues 271-275 (KMSKS) carry the 'KMSKS' region motif. Lys-274 is a binding site for ATP.

The protein belongs to the class-I aminoacyl-tRNA synthetase family. Monomer. Zn(2+) is required as a cofactor.

It localises to the cytoplasm. The enzyme catalyses tRNA(Cys) + L-cysteine + ATP = L-cysteinyl-tRNA(Cys) + AMP + diphosphate. The chain is Cysteine--tRNA ligase from Lactobacillus delbrueckii subsp. bulgaricus (strain ATCC 11842 / DSM 20081 / BCRC 10696 / JCM 1002 / NBRC 13953 / NCIMB 11778 / NCTC 12712 / WDCM 00102 / Lb 14).